Reading from the N-terminus, the 264-residue chain is Proteasome subunit beta type-4 (264 aa).

Met1 carries the post-translational modification N-acetylmethionine. The propeptide occupies 1–45; sequence MEAFWESRAGHWAGGPAPGQFYRIPATPSGLMDPASAPCEGPITR. Position 102 is a phosphotyrosine (Tyr102).

The protein belongs to the peptidase T1B family. In terms of assembly, the 26S proteasome consists of a 20S proteasome core and two 19S regulatory subunits. The 20S proteasome core is a barrel-shaped complex made of 28 subunits that are arranged in four stacked rings. The two outer rings are each formed by seven alpha subunits, and the two inner rings are formed by seven beta subunits. The proteolytic activity is exerted by three beta-subunits PSMB5, PSMB6 and PSMB7. Forms a ternary complex with SMAD1 and OAZ1 before PSMB4 is incorporated into the 20S proteasome. Interacts with PRPF19. In terms of tissue distribution, detected in liver (at protein level).

The protein resides in the cytoplasm. It is found in the nucleus. In terms of biological role, non-catalytic component of the 20S core proteasome complex involved in the proteolytic degradation of most intracellular proteins. This complex plays numerous essential roles within the cell by associating with different regulatory particles. Associated with two 19S regulatory particles, forms the 26S proteasome and thus participates in the ATP-dependent degradation of ubiquitinated proteins. The 26S proteasome plays a key role in the maintenance of protein homeostasis by removing misfolded or damaged proteins that could impair cellular functions, and by removing proteins whose functions are no longer required. Associated with the PA200 or PA28, the 20S proteasome mediates ubiquitin-independent protein degradation. This type of proteolysis is required in several pathways including spermatogenesis (20S-PA200 complex) or generation of a subset of MHC class I-presented antigenic peptides (20S-PA28 complex). SMAD1/OAZ1/PSMB4 complex mediates the degradation of the CREBBP/EP300 repressor SNIP1. The sequence is that of Proteasome subunit beta type-4 (Psmb4) from Mus musculus (Mouse).